The chain runs to 396 residues: Cystathionine beta-lyase (396 aa).

Lys-211 carries the post-translational modification N6-(pyridoxal phosphate)lysine.

It belongs to the trans-sulfuration enzymes family. As to quaternary structure, homotetramer. Pyridoxal 5'-phosphate is required as a cofactor.

It localises to the cytoplasm. The catalysed reaction is L,L-cystathionine + H2O = L-homocysteine + pyruvate + NH4(+). It catalyses the reaction an S-substituted L-cysteine + H2O = a thiol + pyruvate + NH4(+). It participates in amino-acid biosynthesis; L-methionine biosynthesis via de novo pathway; L-homocysteine from L-cystathionine: step 1/1. Its function is as follows. Catalyzes the cleavage of cystathionine to homocysteine, pyruvate and ammonia during methionine biosynthesis. The polypeptide is Cystathionine beta-lyase (metC) (Haemophilus influenzae (strain ATCC 51907 / DSM 11121 / KW20 / Rd)).